Reading from the N-terminus, the 632-residue chain is PAN2-PAN3 deadenylation complex subunit PAN3 (632 aa).

2 disordered regions span residues methionine 1–leucine 22 and proline 99–leucine 127. The span at methionine 107–glutamine 116 shows a compositional bias: basic residues. Over residues serine 117–leucine 127 the composition is skewed to polar residues. Positions lysine 223–glycine 494 are pseudokinase domain. Residues arginine 270, aspartate 321–threonine 328, and asparagine 397–lysine 398 each bind ATP. The stretch at glycine 495–threonine 533 forms a coiled coil. A knob domain region spans residues valine 534–arginine 632.

It belongs to the protein kinase superfamily. PAN3 family. In terms of assembly, homodimer. Forms a heterotrimer with a catalytic subunit PAN2 to form the poly(A)-nuclease (PAN) deadenylation complex. Interacts (via PAM-2 motif) with poly(A)-binding protein (via PABC domain), conferring substrate specificity of the enzyme complex. Interacts with the GW182 family protein ain-1. Highly expressed in germ cells.

It is found in the cytoplasm. Its subcellular location is the P-body. Its function is as follows. Regulatory subunit of the poly(A)-nuclease (PAN) deadenylation complex, one of two cytoplasmic mRNA deadenylases involved in general and miRNA-mediated mRNA turnover. PAN specifically shortens poly(A) tails of RNA and the activity is stimulated by poly(A)-binding protein (PABP). PAN deadenylation is followed by rapid degradation of the shortened mRNA tails by the CCR4-NOT complex. Deadenylated mRNAs are then degraded by two alternative mechanisms, namely exosome-mediated 3'-5' exonucleolytic degradation, or deadenylation-dependent mRNA decaping and subsequent 5'-3' exonucleolytic degradation by XRN1. PAN3 acts as a positive regulator for PAN activity, recruiting the catalytic subunit PAN2 to mRNA via its interaction with RNA and PABP, and to miRNA targets via its interaction with GW182 family proteins. Within the PAN complex, may positively regulate fertility. The sequence is that of PAN2-PAN3 deadenylation complex subunit PAN3 from Caenorhabditis elegans.